The sequence spans 294 residues: Beta-lactamase SME-1 (294 aa).

Positions 1 to 27 (MSNKVNFKTASFLFSVCLALSAFNAHA) are cleaved as a signal peptide. C72 and C242 are joined by a disulfide. The active-site Nucleophile; acyl-ester intermediate is the S73. A beta-lactam is bound by residues S73, K76, S133, and N135. The active-site Proton acceptor is the E172. Residue T239 participates in a beta-lactam binding.

Belongs to the class-A beta-lactamase family.

It carries out the reaction a beta-lactam + H2O = a substituted beta-amino acid. Its activity is regulated as follows. Partially inhibited by the beta-lactamase-blocking agents, clavulanic acid and tazobactam. Not inhibited by EDTA. Functionally, class A beta-lactamase which confers resistance to the beta-lactam antibiotics, including penicillins, some cephalosporins and carbapenems, to JM109 strain E.coli. Acts via hydrolysis of the beta-lactam ring. Has penicillin-, cephalosporin- and carbapenem-hydrolyzing activities. The chain is Beta-lactamase SME-1 from Serratia marcescens.